Consider the following 304-residue polypeptide: Protein YIF1B (304 aa).

Residues 1–146 (MMEYPNQSGF…APRFDINAPD (146 aa)) are Cytoplasmic-facing. Residues 21–54 (MRGSAMEPSDPTQLFDDTSSGVNKHEPGRVGKSP) are disordered. The segment covering 30–42 (DPTQLFDDTSSGV) has biased composition (polar residues). The helical transmembrane segment at 147-167 (LYIPVMGFITYVLVAGLALGT) threads the bilayer. The Extracellular portion of the chain corresponds to 168–182 (QNRFSPEILGIQASS). The chain crosses the membrane as a helical span at residues 183-203 (ALVWLIIEVLAVLLSLYLVTV). Residues 204-212 (NTDLTTIDL) are Cytoplasmic-facing. A helical membrane pass occupies residues 213–233 (VAFSGYKYVGMIVGVVAGLLF). Residues 234 to 236 (GRT) are Extracellular-facing. The helical transmembrane segment at 237 to 257 (GYYLALLWFCASIFVFTIRTL) threads the bilayer. Residues 258 to 282 (RLKILSEAAAEGRLVRGTKNQLRMY) lie on the Cytoplasmic side of the membrane. A helical membrane pass occupies residues 283–303 (LTMAIAAAQPVFMYWLTFHLV). A topological domain (extracellular) is located at residue Arg304.

This sequence belongs to the YIF1 family.

It is found in the endoplasmic reticulum membrane. Its subcellular location is the golgi apparatus membrane. The protein localises to the endoplasmic reticulum-Golgi intermediate compartment membrane. Functions in endoplasmic reticulum to Golgi vesicle-mediated transport and regulates the proper organization of the endoplasmic reticulum and the Golgi. Plays a key role in targeting to neuronal dendrites receptors such as HTR1A. Plays also a role in primary cilium and sperm flagellum assembly probably through protein transport to these compartments. This is Protein YIF1B (yif1b) from Danio rerio (Zebrafish).